Here is a 397-residue protein sequence, read N- to C-terminus: Tryptophan synthase beta chain (397 aa).

Residue K88 is modified to N6-(pyridoxal phosphate)lysine.

Belongs to the TrpB family. As to quaternary structure, tetramer of two alpha and two beta chains. Pyridoxal 5'-phosphate serves as cofactor.

The catalysed reaction is (1S,2R)-1-C-(indol-3-yl)glycerol 3-phosphate + L-serine = D-glyceraldehyde 3-phosphate + L-tryptophan + H2O. Its pathway is amino-acid biosynthesis; L-tryptophan biosynthesis; L-tryptophan from chorismate: step 5/5. Functionally, the beta subunit is responsible for the synthesis of L-tryptophan from indole and L-serine. The protein is Tryptophan synthase beta chain of Haemophilus influenzae (strain PittEE).